The chain runs to 96 residues: Bacterial microcompartment shell protein EutM (96 aa).

The BMC domain maps to 3-87 (ALGMIETRGL…PHGDLEEVFP (85 aa)).

Belongs to the bacterial microcompartments protein family. Homohexamer with a central pore of up to 8.6 Angstroms diameter. The hexamers pack into a two-dimensional array. Interacts with EutQ; a probably cytoplasm-facing helix (Val-49 to Gln-64) interacts with N-terminus of EutQ.

It localises to the bacterial microcompartment. The protein operates within amine and polyamine degradation; ethanolamine degradation. Functionally, probably a major component of the bacterial microcompartment (BMC) shell dedicated to ethanolamine degradation. Each homohexamer has a central pore with an opening of up to 8.6 Angstroms. A positively-charged funnel leads to the pore from each side of the hexamer. The pore probably allows metabolite passage into and out of the BMC. Expression of eutK, eutL, eutM, eutN, eutS (eutSMNLK) in E.coli leads to formation of a single BMC. Expression alone leads to thick filaments that interfere with cell separation. Coexpression of eutQ with eutSMNLK permits E.coli to make cells with more than one mobile BMC, as is usual in vivo. May play a role in BMC shell biogenesis. Can replace homolog pduA in the pdu operon, cells grow better than wild-type on 1,2-propanediol and vitamin B12. Protein is incorporated into the pdu BMC microcompartment. Its function is as follows. The ethanolamine (EA) catabolic bacterial microcompartment (BMC) probably concentrates low levels of ethanolamine catabolic enzymes, concentrates volatile reaction intermediates, keeps the level of toxic acetaldehyde low, generates enough acetyl-CoA to support cell growth, and maintains a pool of free coenzyme A (CoA) and NAD. Deletion of BMC genes (eutK, eutL, eutM) restores growth of eutD deletions, suggesting there are dedicated pools of coenzyme A (CoA) and NAD in the BMC. Expression of the eut operon allows this bacteria to use ethanolamine as a carbon, nitrogen and energy source. It relies on cobalamin (vitamin B12) both as a cofactor for the ethanolamine ammonia-lyase (EAL) activity and to induce the operon. EA enhances bacterial survival in macrophages in a concentration-dependent manner, suggesting it is an important nutrient during infection. The chain is Bacterial microcompartment shell protein EutM from Salmonella typhimurium (strain LT2 / SGSC1412 / ATCC 700720).